A 108-amino-acid chain; its full sequence is Circadian clock oscillator protein KaiB (108 aa).

It belongs to the KaiB family. In terms of assembly, homodimer, interacts with KaiC. The KaiABC complex composition changes during the circadian cycle to control KaiC phosphorylation. Complexes KaiC(6), KaiA(2-4):KaiC(6), KaiB(6):KaiC(6) and KaiC(6):KaiB(6):KaiA(12) are among the most important forms, many form cooperatively. Undergoes a major conformational rearrangment; in the free state forms homotetramers as a dimer of dimers. When bound to the CI domain of KaiC switches to a monomeric thioredoxin-fold (KaiB(fs)). KaiB(fs) binds CikA, leading it to dephosphorylate phospho-RpaA.

Key component of the KaiABC oscillator complex, which constitutes the main circadian regulator in cyanobacteria. Complex composition changes during the circadian cycle to control KaiC phosphorylation. KaiA stimulates KaiC autophosphorylation, while KaiB sequesters KaiA, leading to KaiC autodephosphorylation. Phospho-Ser-431 KaiC accumulation triggers binding of KaiB to form the KaiB(6):KaiC(6) complex, leading to changes in output regulators CikA and SasA. KaiB switches to a thioredoxin-like fold (KaiB(fs)) when bound to KaiC. KaiB(6):KaiC(6) formation exposes a site for KaiA binding that sequesters KaiA from KaiC, making the KaiC(6):KaiB(6):KaiA(12) complex that results in KaiC autodephosphorylation. In terms of biological role, a metamorphic protein which reversibly switches between an inactive tetrameric fold and a rare, thioredoxin-like monomeric fold (KaiB(fs)). KaiB(fs) binds phospho-KaiC, KaiA and CikA. KaiA and CikA compete for binding to KaiB(fs), and KaiB(fs) and SasA compete for binding to KaiC, thus the clock oscillator and output signal pathway are tightly coupled. The polypeptide is Circadian clock oscillator protein KaiB (Nostoc sp. (strain PCC 7120 / SAG 25.82 / UTEX 2576)).